The primary structure comprises 912 residues: Protein translocase subunit SecA (912 aa).

Residues Gln-86, 104 to 108, and Asp-494 contribute to the ATP site; that span reads GEGKT. Positions 860 to 912 are disordered; sequence EAPEKPAQLQYTAPGEDGASQTRVEGRSSGRSGNPAKAAQDGARKPAPKKKKR.

Belongs to the SecA family. In terms of assembly, monomer and homodimer. Part of the essential Sec protein translocation apparatus which comprises SecA, SecYEG and auxiliary proteins SecDF. Other proteins may also be involved.

The protein resides in the cell membrane. The protein localises to the cytoplasm. The catalysed reaction is ATP + H2O + cellular proteinSide 1 = ADP + phosphate + cellular proteinSide 2.. In terms of biological role, part of the Sec protein translocase complex. Interacts with the SecYEG preprotein conducting channel. Has a central role in coupling the hydrolysis of ATP to the transfer of proteins into and across the cell membrane, serving as an ATP-driven molecular motor driving the stepwise translocation of polypeptide chains across the membrane. The chain is Protein translocase subunit SecA from Arthrobacter sp. (strain FB24).